The following is a 315-amino-acid chain: tRNA U34 carboxymethyltransferase (315 aa).

Carboxy-S-adenosyl-L-methionine is bound by residues Lys79, Trp93, Lys98, Gly117, 142 to 144 (DPS), 169 to 170 (VE), Tyr193, and Arg307.

The protein belongs to the class I-like SAM-binding methyltransferase superfamily. CmoB family. In terms of assembly, homotetramer.

It carries out the reaction carboxy-S-adenosyl-L-methionine + 5-hydroxyuridine(34) in tRNA = 5-carboxymethoxyuridine(34) in tRNA + S-adenosyl-L-homocysteine + H(+). Its function is as follows. Catalyzes carboxymethyl transfer from carboxy-S-adenosyl-L-methionine (Cx-SAM) to 5-hydroxyuridine (ho5U) to form 5-carboxymethoxyuridine (cmo5U) at position 34 in tRNAs. This chain is tRNA U34 carboxymethyltransferase, found in Helicobacter hepaticus (strain ATCC 51449 / 3B1).